A 700-amino-acid polypeptide reads, in one-letter code: Elongation factor G (700 aa).

In terms of domain architecture, tr-type G spans 8–290; that stretch reads SLYRNIGISA…AVIDYLPAPT (283 aa). Residues 17-24, 88-92, and 142-145 contribute to the GTP site; these read AHIDAGKT, DTPGH, and NKMD.

Belongs to the TRAFAC class translation factor GTPase superfamily. Classic translation factor GTPase family. EF-G/EF-2 subfamily.

Its subcellular location is the cytoplasm. Its function is as follows. Catalyzes the GTP-dependent ribosomal translocation step during translation elongation. During this step, the ribosome changes from the pre-translocational (PRE) to the post-translocational (POST) state as the newly formed A-site-bound peptidyl-tRNA and P-site-bound deacylated tRNA move to the P and E sites, respectively. Catalyzes the coordinated movement of the two tRNA molecules, the mRNA and conformational changes in the ribosome. This Histophilus somni (strain 129Pt) (Haemophilus somnus) protein is Elongation factor G.